Here is a 72-residue protein sequence, read N- to C-terminus: Translation initiation factor IF-1 (72 aa).

In terms of domain architecture, S1-like spans 1–72 (MSKDDVIEMQ…TRGRITWRAK (72 aa)).

Belongs to the IF-1 family. In terms of assembly, component of the 30S ribosomal translation pre-initiation complex which assembles on the 30S ribosome in the order IF-2 and IF-3, IF-1 and N-formylmethionyl-tRNA(fMet); mRNA recruitment can occur at any time during PIC assembly.

Its subcellular location is the cytoplasm. One of the essential components for the initiation of protein synthesis. Stabilizes the binding of IF-2 and IF-3 on the 30S subunit to which N-formylmethionyl-tRNA(fMet) subsequently binds. Helps modulate mRNA selection, yielding the 30S pre-initiation complex (PIC). Upon addition of the 50S ribosomal subunit IF-1, IF-2 and IF-3 are released leaving the mature 70S translation initiation complex. The chain is Translation initiation factor IF-1 from Clostridium beijerinckii (strain ATCC 51743 / NCIMB 8052) (Clostridium acetobutylicum).